The chain runs to 213 residues: Transcriptional regulatory protein CrdR (213 aa).

The Response regulatory domain maps to 4–119 (KIFLLEDDYL…ELEARIKRFF (116 aa)). Aspartate 53 is subject to 4-aspartylphosphate. A DNA-binding region (ompR/PhoB-type) is located at residues 121 to 212 (DDPIEIMPNI…HKGVGYRFNP (92 aa)).

In terms of processing, phosphorylated by CrdS.

In terms of biological role, member of the two-component regulatory system CrdR/CrdS that induces the transcriptional induction of the copper resistance determinant CrdA. Upon phosphorylation by CrdS, functions as a transcriptional regulator by direct binding to promoter regions of target genes including the crdA promoter or nitric oxide-responsive gene promoters. The polypeptide is Transcriptional regulatory protein CrdR (Helicobacter pylori (strain ATCC 700392 / 26695) (Campylobacter pylori)).